Here is a 942-residue protein sequence, read N- to C-terminus: SWI/SNF-related matrix-associated actin-dependent regulator of chromatin subfamily A-like protein 1 (942 aa).

Residues 5–29 (LTEEQKRKIEENRQRALARRAERLA) adopt a coiled-coil conformation. The disordered stretch occupies residues 24–214 (RAERLAAQQN…KTVSEGRERG (191 aa)). Composition is skewed to polar residues over residues 34-71 (SQTN…SRAA) and 79-88 (KSPSGGNTAP). Over residues 104–119 (RSHDSKSLTDPAKDVK) the composition is skewed to basic and acidic residues. Polar residues-rich tracts occupy residues 129-138 (SVPSGPSNAP), 149-162 (TPGQ…NSYS), and 171-187 (DNDT…TTIT). HARP domains are found at residues 228–299 (ASGA…KALE) and 331–402 (PSAT…EPLP). The 156-residue stretch at 448–603 (NFAVSREGRL…YTQIAAVRPS (156 aa)) folds into the Helicase ATP-binding domain. 461-468 (DDMGLGKT) is an ATP binding site. A DESH box motif is present at residues 552–555 (DESH). The Nuclear localization signal motif lies at 647–664 (RRLKSEVLSQLPAKQRKM). Residues 719-872 (YIMDLLESGR…EANFSETTES (154 aa)) form the Helicase C-terminal domain.

It belongs to the SNF2/RAD54 helicase family. SMARCAL1 subfamily.

Its subcellular location is the nucleus. The catalysed reaction is ATP + H2O = ADP + phosphate + H(+). ATP-dependent annealing helicase that catalyzes the rewinding of the stably unwound DNA. Rewinds single-stranded DNA bubbles that are stably bound by replication protein A (RPA). Acts throughout the genome to reanneal stably unwound DNA, performing the opposite reaction of many enzymes, such as helicases and polymerases, that unwind DNA. The sequence is that of SWI/SNF-related matrix-associated actin-dependent regulator of chromatin subfamily A-like protein 1 (smarcal1) from Xenopus tropicalis (Western clawed frog).